The sequence spans 601 residues: MRVVRLLRLRAALTLLGEVPRRPASRGVPGSRRTQKGSGARWEKEKHEDGVKWRQLEHKGPYFAPPYEPLPDGVRFFYEGRPVRLSVAAEEVATFYGRMLDHEYTTKEVFRKNFFNDWRKEMAVEEREVIKSLDKCDFTEIHRYFVDKAAARKVLSREEKQKLKEEAEKLQQEFGYCILDGHQEKIGNFKIEPPGLFRGRGDHPKMGMLKRRITPEDVVINCSRDSKIPEPPAGHQWKEVRSDNTVTWLAAWTESVQNSIKYIMLNPCSKLKGETAWQKFETARRLRGFVDEIRSQYRADWKSREMKTRQRAVALYFIDKLALRAGNEKEDGEAADTVGCCSLRVEHVQLHPEADGCQHVVEFDFLGKDCIRYYNRVPVEKPVYKNLQLFMENKDPRDDLFDRLTTTSLNKHLQELMDGLTAKVFRTYNASITLQEQLRALTRAEDSIAAKILSYNRANRVVAILCNHQRATPSTFEKSMQNLQTKIQAKKEQVAEARAELRRARAEHKAQGDGKSRSVLEKKRRLLEKLQEQLAQLSVQATDKEENKQVALGTSKLNYLDPRISIAWCKRFRVPVEKIYSKTQRERFAWALAMAGEDFEF.

A mitochondrion-targeting transit peptide spans 1–50 (MRVVRLLRLRAALTLLGEVPRRPASRGVPGSRRTQKGSGARWEKEKHEDG). Residues 22–48 (RPASRGVPGSRRTQKGSGARWEKEKHE) form a disordered region. Interaction with DNA stretches follow at residues 261–262 (KY), 324–329 (RAGNEK), and 421–423 (TAK). One can recognise a Topo IB-type catalytic domain in the interval 268–601 (CSKLKGETAW…LAMAGEDFEF (334 aa)). Tyr-559 acts as the O-(3'-phospho-DNA)-tyrosine intermediate in catalysis.

This sequence belongs to the type IB topoisomerase family. The cofactor is Ca(2+). Mg(2+) serves as cofactor. As to expression, ubiquitous; highest in skeletal muscle, heart, brain and fetal liver.

The protein resides in the mitochondrion. The catalysed reaction is ATP-independent breakage of single-stranded DNA, followed by passage and rejoining.. Releases the supercoiling and torsional tension of DNA introduced during duplication of mitochondrial DNA by transiently cleaving and rejoining one strand of the DNA duplex. Introduces a single-strand break via transesterification at a target site in duplex DNA. The scissile phosphodiester is attacked by the catalytic tyrosine of the enzyme, resulting in the formation of a DNA-(3'-phosphotyrosyl)-enzyme intermediate and the expulsion of a 5'-OH DNA strand. The free DNA strand then rotates around the intact phosphodiester bond on the opposing strand, thus removing DNA supercoils. Finally, in the religation step, the DNA 5'-OH attacks the covalent intermediate to expel the active-site tyrosine and restore the DNA phosphodiester backbone. In Homo sapiens (Human), this protein is DNA topoisomerase I, mitochondrial (TOP1MT).